The following is a 623-amino-acid chain: MVSKQQTMGFQTEVKQMLHLVVHSLYSNKEIFLRELISNASDALDKLRFLALSNGSLFENDSDLKISIQINEKLQTITISDNGIGLSWEEAVENLGTIAKSGTKEFISQLTGEQAKDSQLIGQFGVGFYSAFIVADKVTVKSRRAGLQPEDGIVWESKGDGEFTIGYEKKLTRGTEITLHLKPENDEFLSDWRIRGIISKYSDHICWPILMKKLSEEGKESKEFETVNKATALWTLQKSEISEEEYKQLYKHISHDYMDPLTWSHNHVEGKHEYITLLYIPAHAPFDLWQHEAKHGLKLYVKRVFIMDEATQFLPRYLRFVKGIVDASDLPLNISREILQDNKQVESIRAACTKRVLSMLEKMATNDKETYQKFWNEFGLVLKEGPIEDFANKEAIAKLLRFSTTASGSEKQEVSLEEYVSRMKEGQDKIYYITASSYNAAKNSPHLEIFRKKGIEVLLLSDKVDEWLVGYMNEFAGKKLQSISKGKIELGDDETSEQIKEQEKTLEPLIKHIKSVLNDRVKDVLLTNRLTDSPACVVADEQDMGLEMQRILQAAGQQVPVSKPIFEINPDHALIKRLHDIQDDNQFELWVTMLFEQAVLAEGGQLDNPADFVNRVNRLLVSS.

Residues M1 to R336 are a; substrate-binding. Positions E337–R550 are b. The tract at residues I551 to S623 is c.

The protein belongs to the heat shock protein 90 family. As to quaternary structure, homodimer.

The protein resides in the cytoplasm. Its function is as follows. Molecular chaperone. Has ATPase activity. This Legionella pneumophila (strain Paris) protein is Chaperone protein HtpG.